We begin with the raw amino-acid sequence, 362 residues long: MKLKRMVVGLGERSYPIWIGGGIFSRLPEALQEVNFPKKIAVVSNPLVQSLYGQALADALQSSGYDHHFISIPDGEEHKNWTTLQTIYDGLIAKGFDRHCGLIALGGGVTGDMGGFAAATFLRGIPYIQVPTTLLAQVDSSVGGKTAINHPQGKNLIGAFYQPRHVHIDVDTLQSLDAREFATGMAEVIKYGIIKDKAFFDWLYTHREALQRRDTEALISAVKRACQIKANIVEVDEKEQALRAILNFGHTFGHAIENLSGYQTYRHGEAVAIGMMVAAHVSRRMDLCTADEVGAIERLLQVFDLPVTPPDYSLEAYLEAMQRDKKVQQGKLRLVLNKGIGDCLVQEIDAPAMLFAEALKQF.

Residues 74–79 (DGEEHK), 108–112 (GVTGD), 132–133 (TT), Lys145, and Lys154 each bind NAD(+). Residues Glu187, His250, and His267 each contribute to the Zn(2+) site.

The protein belongs to the sugar phosphate cyclases superfamily. Dehydroquinate synthase family. The cofactor is Co(2+). Requires Zn(2+) as cofactor. NAD(+) is required as a cofactor.

It localises to the cytoplasm. The enzyme catalyses 7-phospho-2-dehydro-3-deoxy-D-arabino-heptonate = 3-dehydroquinate + phosphate. Its pathway is metabolic intermediate biosynthesis; chorismate biosynthesis; chorismate from D-erythrose 4-phosphate and phosphoenolpyruvate: step 2/7. Functionally, catalyzes the conversion of 3-deoxy-D-arabino-heptulosonate 7-phosphate (DAHP) to dehydroquinate (DHQ). This is 3-dehydroquinate synthase from Syntrophotalea carbinolica (strain DSM 2380 / NBRC 103641 / GraBd1) (Pelobacter carbinolicus).